The primary structure comprises 262 residues: MNDNYMINPKKELSQCFIHSTDITDKIVNYAGNISNFSIIEIGPGLGTMTYSILKKNPKKLISIEKDSRLLPIHDKIIKEFQGKYEFILSDALDIDLRNIAKPPVKVIANLPYSIATLLLIKWINYINFFHSFTLMFQKEVADRIIAQPNNKNYGTLSILTQLFADVYKMQDFGPEIFSPKPKVFSSVINIVVLPQPRFDVNYDKLRKIVKITFNQRRKMIRSTLKQITNNTDEILHSLNIPNNLRPENLSIKQFCDIANCI.

Residues Ile-18, Gly-43, Glu-65, Asp-91, and Asn-110 each contribute to the S-adenosyl-L-methionine site.

It belongs to the class I-like SAM-binding methyltransferase superfamily. rRNA adenine N(6)-methyltransferase family. RsmA subfamily.

The protein resides in the cytoplasm. It catalyses the reaction adenosine(1518)/adenosine(1519) in 16S rRNA + 4 S-adenosyl-L-methionine = N(6)-dimethyladenosine(1518)/N(6)-dimethyladenosine(1519) in 16S rRNA + 4 S-adenosyl-L-homocysteine + 4 H(+). Functionally, specifically dimethylates two adjacent adenosines (A1518 and A1519) in the loop of a conserved hairpin near the 3'-end of 16S rRNA in the 30S particle. May play a critical role in biogenesis of 30S subunits. This Ehrlichia ruminantium (strain Gardel) protein is Ribosomal RNA small subunit methyltransferase A.